Here is a 373-residue protein sequence, read N- to C-terminus: Probable G-protein coupled receptor 173 (373 aa).

Topologically, residues 1–26 are extracellular; that stretch reads MANTTGEPEEVSGALSPPSASAYVKL. Asn3 carries an N-linked (GlcNAc...) asparagine glycan. Residues 27–47 form a helical membrane-spanning segment; sequence VLLGLIMCVSLAGNAILSLLV. The Cytoplasmic portion of the chain corresponds to 48 to 59; the sequence is LKERALHKAPYY. The chain crosses the membrane as a helical span at residues 60 to 80; it reads FLLDLCLADGIRSAVCFPFVL. Topologically, residues 81–97 are extracellular; that stretch reads ASVRHGSSWTFSALSCK. Cys96 and Cys174 are disulfide-bonded. Residues 98-118 traverse the membrane as a helical segment; the sequence is IVAFMAVLFCFHAAFMLFCIS. Topologically, residues 119-139 are cytoplasmic; the sequence is VTRYMAIAHHRFYAKRMTLWT. The helical transmembrane segment at 140–160 threads the bilayer; the sequence is CAAVICMAWTLSVAMAFPPVF. The Extracellular portion of the chain corresponds to 161 to 188; it reads DVGTYKFIREEDQCIFEHRYFKANDTLG. An N-linked (GlcNAc...) asparagine glycan is attached at Asn184. Residues 189-209 traverse the membrane as a helical segment; sequence FMLMLAVLMAATHAVYGKLLL. At 210–287 the chain is on the cytoplasmic side; that stretch reads FEYRHRKMKP…VKGEKQLGRM (78 aa). A helical membrane pass occupies residues 288–308; it reads FYAITLLFLLLWSPYIVACYW. Topologically, residues 309–322 are extracellular; sequence RVFVKACAVPHRYL. Residues 323 to 343 form a helical membrane-spanning segment; that stretch reads ATAVWMSFAQAAVNPIVCFLL. Topologically, residues 344–373 are cytoplasmic; it reads NKDLKKCLRTHAPCWGTGGAPAPREPYCVM.

This sequence belongs to the G-protein coupled receptor 1 family. Expressed in the ovary, specifically in granulosa cells of follicles that have passed the primary stage and in oocytes (at protein level). Expressed at high levels in brain. Lower levels in small intestine. In brain regions, detected in all regions tested. Highest levels in the cerebellum and cerebral cortex.

It is found in the cell membrane. Functionally, is a receptor for the SMIM20 derived peptides Phoenixin-14 and Phoenixin-20. It mediates the Phoenixin-14 and Phoenixin-20 augmentation of gonadotropin-releasing hormone (GNRH) signaling in the hypothalamus and pituitary gland. In the ovary, it mediates the effects of Phoenixin-14 and Phoenixin-20 induced granulosa cell proliferation during follicular growth. This is Probable G-protein coupled receptor 173 (GPR173) from Homo sapiens (Human).